A 199-amino-acid chain; its full sequence is Holliday junction branch migration complex subunit RuvA (199 aa).

The interval 1-63 is domain I; the sequence is MIASVRGEVL…EDSMTLYGFS (63 aa). The segment at 64 to 141 is domain II; it reads DTESKDLFSL…DAVATTAGAA (78 aa). A flexible linker region spans residues 141 to 145; it reads ASGAV. Positions 146-199 are domain III; the sequence is VGSSIRDQIVEALEGLGFPIKQAEQATDSVLAESPEATTSVALRSALSLLGKTR.

Belongs to the RuvA family. Homotetramer. Forms an RuvA(8)-RuvB(12)-Holliday junction (HJ) complex. HJ DNA is sandwiched between 2 RuvA tetramers; dsDNA enters through RuvA and exits via RuvB. An RuvB hexamer assembles on each DNA strand where it exits the tetramer. Each RuvB hexamer is contacted by two RuvA subunits (via domain III) on 2 adjacent RuvB subunits; this complex drives branch migration. In the full resolvosome a probable DNA-RuvA(4)-RuvB(12)-RuvC(2) complex forms which resolves the HJ.

It localises to the cytoplasm. The RuvA-RuvB-RuvC complex processes Holliday junction (HJ) DNA during genetic recombination and DNA repair, while the RuvA-RuvB complex plays an important role in the rescue of blocked DNA replication forks via replication fork reversal (RFR). RuvA specifically binds to HJ cruciform DNA, conferring on it an open structure. The RuvB hexamer acts as an ATP-dependent pump, pulling dsDNA into and through the RuvAB complex. HJ branch migration allows RuvC to scan DNA until it finds its consensus sequence, where it cleaves and resolves the cruciform DNA. The chain is Holliday junction branch migration complex subunit RuvA from Rhodococcus erythropolis (strain PR4 / NBRC 100887).